The primary structure comprises 612 residues: Dihydroxy-acid dehydratase (612 aa).

Asp81 serves as a coordination point for Mg(2+). Position 122 (Cys122) interacts with [2Fe-2S] cluster. 2 residues coordinate Mg(2+): Asp123 and Lys124. Lys124 carries the post-translational modification N6-carboxylysine. Cys195 lines the [2Fe-2S] cluster pocket. Glu491 is a Mg(2+) binding site. Ser517 (proton acceptor) is an active-site residue.

It belongs to the IlvD/Edd family. In terms of assembly, homodimer. [2Fe-2S] cluster serves as cofactor. Requires Mg(2+) as cofactor.

The enzyme catalyses (2R)-2,3-dihydroxy-3-methylbutanoate = 3-methyl-2-oxobutanoate + H2O. The catalysed reaction is (2R,3R)-2,3-dihydroxy-3-methylpentanoate = (S)-3-methyl-2-oxopentanoate + H2O. The protein operates within amino-acid biosynthesis; L-isoleucine biosynthesis; L-isoleucine from 2-oxobutanoate: step 3/4. Its pathway is amino-acid biosynthesis; L-valine biosynthesis; L-valine from pyruvate: step 3/4. In terms of biological role, functions in the biosynthesis of branched-chain amino acids. Catalyzes the dehydration of (2R,3R)-2,3-dihydroxy-3-methylpentanoate (2,3-dihydroxy-3-methylvalerate) into 2-oxo-3-methylpentanoate (2-oxo-3-methylvalerate) and of (2R)-2,3-dihydroxy-3-methylbutanoate (2,3-dihydroxyisovalerate) into 2-oxo-3-methylbutanoate (2-oxoisovalerate), the penultimate precursor to L-isoleucine and L-valine, respectively. This chain is Dihydroxy-acid dehydratase, found in Buchnera aphidicola subsp. Baizongia pistaciae (strain Bp).